The primary structure comprises 183 residues: MKAYLALISAAVIGLAACSQEPAAPAAEATPAAEAPASEAPAAEAAPADAAEAPAAGNCAATVESNDNMQFNTKDIQVSKACKEFTITLKHTGTQPKASMGHNLVIAKAEDMDGVFKDGVGAADTDYVKPDDARVVAHTKLIGGGEEASLTLDPAKLADGEYKFACTFPGHGALMNGKVTLVD.

The first 17 residues, 1 to 17 (MKAYLALISAAVIGLAA), serve as a signal peptide directing secretion. Cysteine 18 is lipidated: N-palmitoyl cysteine. Cysteine 18 carries the S-diacylglycerol cysteine lipid modification. A disordered region spans residues 27 to 51 (AEATPAAEAPASEAPAAEAAPADAA). Positions 57-183 (GNCAATVESN…LMNGKVTLVD (127 aa)) constitute a Plastocyanin-like domain. The Cu cation site is built by histidine 102, cysteine 166, histidine 171, and methionine 175.

It depends on Cu cation as a cofactor.

It is found in the cell outer membrane. This is Outer membrane protein H.8 from Neisseria meningitidis serogroup B (strain ATCC BAA-335 / MC58).